We begin with the raw amino-acid sequence, 44 residues long: Photosystem I reaction center subunit IX (44 aa).

The chain crosses the membrane as a helical span at residues 9–29 (FIRSAPVVAAVWLSLTAGIII).

The protein belongs to the PsaJ family.

It is found in the cellular thylakoid membrane. In terms of biological role, may help in the organization of the PsaE and PsaF subunits. In Prochlorococcus marinus subsp. pastoris (strain CCMP1986 / NIES-2087 / MED4), this protein is Photosystem I reaction center subunit IX.